Here is a 542-residue protein sequence, read N- to C-terminus: 1,3-beta-glucanosyltransferase gas1 (542 aa).

Residues 1-19 (MKFSILSLAVAGLVGLAKA) form the signal peptide. Asparagine 35 carries N-linked (GlcNAc...) asparagine glycosylation. Cysteine 70 and cysteine 99 are disulfide-bonded. Tyrosine 88 provides a ligand contact to (1,3-beta-D-glucosyl)n. Asparagine 91 is a glycosylation site (N-linked (GlcNAc...) asparagine). Positions 156 and 157 each coordinate (1,3-beta-D-glucosyl)n. Glutamate 157 acts as the Proton donor in catalysis. The N-linked (GlcNAc...) asparagine glycan is linked to asparagine 161. Aspartate 198 and arginine 203 together coordinate (1,3-beta-D-glucosyl)n. Cystine bridges form between cysteine 212–cysteine 345, cysteine 230–cysteine 261, cysteine 367–cysteine 419, cysteine 376–cysteine 439, and cysteine 395–cysteine 400. An N-linked (GlcNAc...) asparagine glycan is attached at asparagine 249. The active-site Nucleophile is glutamate 258. Asparagine 279 is a glycosylation site (N-linked (GlcNAc...) asparagine). Residue tyrosine 290 coordinates (1,3-beta-D-glucosyl)n. N-linked (GlcNAc...) asparagine glycans are attached at residues asparagine 406, asparagine 484, asparagine 502, and asparagine 509. The disordered stretch occupies residues 490–515 (MSTSYTSGSGSSNSSGSSSNSSSKSS). Serine 516 is lipidated: GPI-anchor amidated serine. Positions 517-542 (GASSYNLNMVITFLSVVIGGTAVLFI) are cleaved as a propeptide — removed in mature form.

This sequence belongs to the glycosyl hydrolase 72 family. In terms of processing, the GPI-anchor is attached to the protein in the endoplasmic reticulum and serves to target the protein to the cell surface. There, the glucosamine-inositol phospholipid moiety is cleaved off and the GPI-modified mannoprotein is covalently attached via its lipidless GPI glycan remnant to the 1,6-beta-glucan of the outer cell wall layer.

It is found in the secreted. Its subcellular location is the cell wall. It localises to the membrane. Its function is as follows. Splits internally a 1,3-beta-glucan molecule and transfers the newly generated reducing end (the donor) to the non-reducing end of another 1,3-beta-glucan molecule (the acceptor) forming a 1,3-beta linkage, resulting in the elongation of 1,3-beta-glucan chains in the cell wall. The sequence is that of 1,3-beta-glucanosyltransferase gas1 (gas1) from Schizosaccharomyces pombe (strain 972 / ATCC 24843) (Fission yeast).